Consider the following 118-residue polypeptide: Small ribosomal subunit protein uS13 (118 aa).

A disordered region spans residues 92 to 118 (RRGLPVRGQRTKTNARTRKGPRKPIKK).

It belongs to the universal ribosomal protein uS13 family. In terms of assembly, part of the 30S ribosomal subunit. Forms a loose heterodimer with protein S19. Forms two bridges to the 50S subunit in the 70S ribosome.

Located at the top of the head of the 30S subunit, it contacts several helices of the 16S rRNA. In the 70S ribosome it contacts the 23S rRNA (bridge B1a) and protein L5 of the 50S subunit (bridge B1b), connecting the 2 subunits; these bridges are implicated in subunit movement. Contacts the tRNAs in the A and P-sites. The chain is Small ribosomal subunit protein uS13 from Pectobacterium carotovorum subsp. carotovorum (strain PC1).